We begin with the raw amino-acid sequence, 100 residues long: Small ribosomal subunit protein uS14 (100 aa).

The protein belongs to the universal ribosomal protein uS14 family. Part of the 30S ribosomal subunit. Contacts proteins S3 and S10.

Binds 16S rRNA, required for the assembly of 30S particles and may also be responsible for determining the conformation of the 16S rRNA at the A site. The polypeptide is Small ribosomal subunit protein uS14 (Prochlorococcus marinus (strain MIT 9211)).